We begin with the raw amino-acid sequence, 408 residues long: Imidazolonepropionase (408 aa).

Positions 66 and 68 each coordinate Fe(3+). Zn(2+) contacts are provided by H66 and H68. Residues R75, Y138, and H171 each coordinate 4-imidazolone-5-propanoate. Y138 contributes to the N-formimidoyl-L-glutamate binding site. Fe(3+) is bound at residue H236. Position 236 (H236) interacts with Zn(2+). Residue Q239 coordinates 4-imidazolone-5-propanoate. D311 is a binding site for Fe(3+). A Zn(2+)-binding site is contributed by D311. N-formimidoyl-L-glutamate is bound by residues N313 and G315. S316 is a binding site for 4-imidazolone-5-propanoate.

Belongs to the metallo-dependent hydrolases superfamily. HutI family. Requires Zn(2+) as cofactor. Fe(3+) is required as a cofactor.

It localises to the cytoplasm. The catalysed reaction is 4-imidazolone-5-propanoate + H2O = N-formimidoyl-L-glutamate. It participates in amino-acid degradation; L-histidine degradation into L-glutamate; N-formimidoyl-L-glutamate from L-histidine: step 3/3. Catalyzes the hydrolytic cleavage of the carbon-nitrogen bond in imidazolone-5-propanoate to yield N-formimidoyl-L-glutamate. It is the third step in the universal histidine degradation pathway. The sequence is that of Imidazolonepropionase from Idiomarina loihiensis (strain ATCC BAA-735 / DSM 15497 / L2-TR).